The following is a 553-amino-acid chain: Hyaluronan synthase 3 (553 aa).

Residues 1 to 15 lie on the Cytoplasmic side of the membrane; it reads MPVQLTTALRVVGTS. Residues 16–36 form a helical membrane-spanning segment; it reads LFALAVLGGILAAYVTGYQFI. Topologically, residues 37–44 are extracellular; that stretch reads HTEKHYLS. The helical transmembrane segment at 45 to 65 threads the bilayer; that stretch reads FGLYGAILGLHLLIQSLFAFL. Residues 66 to 377 lie on the Cytoplasmic side of the membrane; sequence EHRRMRRAGQ…NSLWFHKHHL (312 aa). The chain crosses the membrane as a helical span at residues 378–398; sequence WMTYESVVTGFFPFFLIATVI. Over 399 to 408 the chain is Extracellular; the sequence is QLFYRGRIWN. The helical transmembrane segment at 409–429 threads the bilayer; that stretch reads ILLFLLTVQLVGIIKATYACF. Residues 430–440 are Cytoplasmic-facing; sequence LRGNAEMIFMS. The helical transmembrane segment at 441–461 threads the bilayer; that stretch reads LYSLLYMSSLLPAKIFAIATI. The N-linked (GlcNAc...) asparagine glycan is linked to Asn-462. Topologically, residues 462–473 are extracellular; it reads NKSGWGTSGRKT. The helical transmembrane segment at 474–494 threads the bilayer; that stretch reads IVVNFIGLIPVSIWVAVLLGG. At 495–515 the chain is on the cytoplasmic side; the sequence is LAYTAYCQDLFSETELAFLVS. The chain crosses the membrane as a helical span at residues 516-536; it reads GAILYGCYWVALLMLYLAIIA. Residues 537–553 lie on the Extracellular side of the membrane; sequence RRCGKKPEQYSLAFAEV.

Belongs to the NodC/HAS family. Homodimers. Forms heterodimers with HAS2 and HAS1. Requires Mg(2+) as cofactor. In terms of processing, O-GlcNAcylation increases the hyaluronan synthase activity, HAS3 stability and its plasma membrane residence. The concentration of UDP-GlcNAc controls the level of O-GlcNAc modification.

Its subcellular location is the cell membrane. It is found in the golgi apparatus membrane. It localises to the golgi apparatus. The protein localises to the trans-Golgi network membrane. The protein resides in the early endosome. The catalysed reaction is [hyaluronan](n) + UDP-N-acetyl-alpha-D-glucosamine = N-acetyl-beta-D-glucosaminyl-(1-&gt;4)-[hyaluronan](n) + UDP + H(+). The enzyme catalyses N-acetyl-beta-D-glucosaminyl-(1-&gt;4)-[hyaluronan](n) + UDP-alpha-D-glucuronate = [hyaluronan](n+1) + UDP + H(+). It functions in the pathway glycan biosynthesis; hyaluronan biosynthesis. The enzymatic activity depends on the availability of cytosolic levels of UDP-GlcUA and UDP-GlcNAc. Its function is as follows. Catalyzes the addition of GlcNAc or GlcUA monosaccharides to the nascent hyaluronan polymer. Therefore, it is essential to hyaluronan synthesis a major component of most extracellular matrices that has a structural role in tissues architectures and regulates cell adhesion, migration and differentiation. This is one of three isoenzymes responsible for cellular hyaluronan synthesis. This Homo sapiens (Human) protein is Hyaluronan synthase 3.